We begin with the raw amino-acid sequence, 412 residues long: Putative competence-damage inducible protein (412 aa).

This sequence belongs to the CinA family.

The sequence is that of Putative competence-damage inducible protein from Bacillus cereus (strain Q1).